Reading from the N-terminus, the 392-residue chain is Chorismate synthase (392 aa).

NADP(+) is bound by residues R40 and R46. FMN is bound by residues 135–137 (RAS), 256–257 (QA), G300, 315–319 (KPIAT), and R341.

This sequence belongs to the chorismate synthase family. As to quaternary structure, homotetramer. FMNH2 is required as a cofactor.

It carries out the reaction 5-O-(1-carboxyvinyl)-3-phosphoshikimate = chorismate + phosphate. It participates in metabolic intermediate biosynthesis; chorismate biosynthesis; chorismate from D-erythrose 4-phosphate and phosphoenolpyruvate: step 7/7. Functionally, catalyzes the anti-1,4-elimination of the C-3 phosphate and the C-6 proR hydrogen from 5-enolpyruvylshikimate-3-phosphate (EPSP) to yield chorismate, which is the branch point compound that serves as the starting substrate for the three terminal pathways of aromatic amino acid biosynthesis. This reaction introduces a second double bond into the aromatic ring system. This chain is Chorismate synthase, found in Nocardioides sp. (strain ATCC BAA-499 / JS614).